A 434-amino-acid chain; its full sequence is 23S rRNA (uracil(1939)-C(5))-methyltransferase RlmD (434 aa).

The TRAM domain maps to Arg10–Arg68. 4 residues coordinate [4Fe-4S] cluster: Cys81, Cys87, Cys90, and Cys162. S-adenosyl-L-methionine-binding residues include Gln265, Phe294, Asn299, Glu315, Asn342, and Asp363. The active-site Nucleophile is Cys389.

Belongs to the class I-like SAM-binding methyltransferase superfamily. RNA M5U methyltransferase family. RlmD subfamily.

It catalyses the reaction uridine(1939) in 23S rRNA + S-adenosyl-L-methionine = 5-methyluridine(1939) in 23S rRNA + S-adenosyl-L-homocysteine + H(+). Catalyzes the formation of 5-methyl-uridine at position 1939 (m5U1939) in 23S rRNA. This Klebsiella pneumoniae (strain 342) protein is 23S rRNA (uracil(1939)-C(5))-methyltransferase RlmD.